Reading from the N-terminus, the 147-residue chain is UPF0735 ACT domain-containing protein Cthe_1377 (147 aa).

Residues 71-146 enclose the ACT domain; that stretch reads TLFFTVEDYA…GVKRQEILAR (76 aa).

This sequence belongs to the UPF0735 family.

The polypeptide is UPF0735 ACT domain-containing protein Cthe_1377 (Acetivibrio thermocellus (strain ATCC 27405 / DSM 1237 / JCM 9322 / NBRC 103400 / NCIMB 10682 / NRRL B-4536 / VPI 7372) (Clostridium thermocellum)).